Reading from the N-terminus, the 455-residue chain is MLEYTAGLIRRNKKKFLISSGIIGVGYYVTKTINNKIQEFQNRIREENFAKEQIKRRFHQTQSDCYMTFLSLLPVLCEPIMDDLPVETITKQLQIRRLEKQIGNKDVKNSGSTVLSDDFSTSQEGAISEDTNKPPELKSKNQLWQELKIKAITRFLTLIYCESLLIVFLHLQLNILSRKSYLETAIRLASETQGIDLVDQESNGDFSGNTQDENLSEQAFLSFSWWLLNKGWLEIKNKIEPCVEQHFGGINPRQQLKINEFAELLNKCQNCIDLKVLNLTEEDIHLGVGVIEDQSQPVGRKSTNFITNALLPPKEFEFFLLQQTNDLDFLSRFNNNIVNTESLNMLLDELNNYLNNADINLIVNKLATLGITKVLDEIVLNLLQKNRPNPISDMNIRDIDLNDFPPYKLAALLANITKQSISLTNNSVENPILADLNNLPELNDLSASVYSNFDP.

Polar residues predominate over residues 113–125 (TVLSDDFSTSQEG). Positions 113–135 (TVLSDDFSTSQEGAISEDTNKPP) are disordered. A helical transmembrane segment spans residues 155–171 (FLTLIYCESLLIVFLHL).

It belongs to the peroxin-3 family. As to quaternary structure, component of the peroxisomal docking complex, composed of at least PEX3, PEX13, PEX14 and PEX17. Component of the peroxisomal translocation complex, composed of at least PEX3, PEX2, PEX10 and PEX12. Interacts with PEX19. Interacts with the pexophagy receptor ATG30.

It localises to the peroxisome membrane. Peroxisomal membrane protein required for peroxisome biosynthesis. Shared component of both the peroxisomal docking complex and the peroxisomal translocation complex. The two types of peroxisomal matrix targeting signals, PTS1 and PTS2, are first recognized in the cytosol by their receptors PEX5 and PEX7, respectively, which then carry the cargo to the peroxisomal membrane. The peroxisomal targeting signal (PTS) receptor-cargo complexes interact with peroxisomal membrane protein (PMP) components of the docking complex. They have then additional downstream interactions with the translocation complex, leading to the transport of fully folded and oligomerized cargo into the peroxisome matrix. PEX3 acts as an anchoring site for PEX19 on the peroxisomal membrane and thus plays a crucial role in the assembly of the peroxisomal translocation complex. Is also essential for the interaction between the two complexes. Finally. PEX3 activates selective autophagy of peroxisomes (pexophagy) via interaction with the pexophagy receptor ATG30. The chain is Peroxisomal membrane protein PEX3 from Komagataella pastoris (Yeast).